A 184-amino-acid chain; its full sequence is UPF0149 protein Avin_47340 (184 aa).

Belongs to the UPF0149 family.

In Azotobacter vinelandii (strain DJ / ATCC BAA-1303), this protein is UPF0149 protein Avin_47340.